The following is an 82-amino-acid chain: Small ribosomal subunit protein uS17 (82 aa).

It belongs to the universal ribosomal protein uS17 family. Part of the 30S ribosomal subunit.

In terms of biological role, one of the primary rRNA binding proteins, it binds specifically to the 5'-end of 16S ribosomal RNA. The sequence is that of Small ribosomal subunit protein uS17 from Azorhizobium caulinodans (strain ATCC 43989 / DSM 5975 / JCM 20966 / LMG 6465 / NBRC 14845 / NCIMB 13405 / ORS 571).